The chain runs to 190 residues: dTTP/UTP pyrophosphatase (190 aa).

The active-site Proton acceptor is Asp70.

It belongs to the Maf family. YhdE subfamily. The cofactor is a divalent metal cation.

It is found in the cytoplasm. It carries out the reaction dTTP + H2O = dTMP + diphosphate + H(+). The enzyme catalyses UTP + H2O = UMP + diphosphate + H(+). In terms of biological role, nucleoside triphosphate pyrophosphatase that hydrolyzes dTTP and UTP. May have a dual role in cell division arrest and in preventing the incorporation of modified nucleotides into cellular nucleic acids. In Paramagnetospirillum magneticum (strain ATCC 700264 / AMB-1) (Magnetospirillum magneticum), this protein is dTTP/UTP pyrophosphatase.